The following is a 723-amino-acid chain: MSETNSGGKCPVMHGANSTENRDVMNWWPEALNLDILHQHDHKTNPMGEDFDYREEVKKLDFEAVKKDLHALMTDSQDWWPADWGHYGGLMIRMSWHAAGTYRIQDGRGGGGTGNQRFAPLNSWPDNVSLDKARRLLWPIKKKYGNKLSWADLIILAGTVAYESMGLPSYGFSFGREDIWHPEKDIYWGNEKEWLAPSDERYGDVEKPDTMENPLAAVQMGLIYVNPEGVNSQPDPIKTGEQVRVTFARMAMDDEETAALTAGGHTVGKCHGNGDAGALGPEPEAADVEEQGFGWSNPNMKGKAANAVTSGIEGAWTTHPTKFDMGYFDLLFGYEWELKKSPAGAWQWEPINMKEEDKPLDASDPSKRHNPIMTDADMAMKMDPKYRAICEKFMADPEYFKDCFARAWFKLTHRDLGPKARYIGPEAPAEDLIWQDPVPAGSTDYCEEVVKEKVADSGLSISEMVSTAWDSARTFRGSDMRGGANGARIRLAPQKDWEGNEPARLSKVLKVYEQISAETGASVADVIVLAGSVGIEKAAKAAGYEVRVPFLKGRGDATDEMTDAPSFEYLEPVADGFRNWQKKDYIVKPEELLLDRAQLMGLTAPEMTVLIGGMRVLGTNHGGTKYGVFTDREGQLTNDFFVNLTDMAYSWKPVGNGTYEIRDRKTDQTKWTASRVDLVFGSNSILRSYAEVYAQDDNGEKFVKDFIAAWTKVMNNDRFDVQA.

Positions 96–224 (WHAAGTYRIQ…LAAVQMGLIY (129 aa)) form a cross-link, tryptophyl-tyrosyl-methioninium (Trp-Tyr) (with M-250). The active-site Proton acceptor is H97. A cross-link (tryptophyl-tyrosyl-methioninium (Tyr-Met) (with W-96)) is located at residues 224-250 (YVNPEGVNSQPDPIKTGEQVRVTFARM). Residue H265 coordinates heme b.

It belongs to the peroxidase family. Peroxidase/catalase subfamily. Homodimer or homotetramer. Heme b serves as cofactor. In terms of processing, formation of the three residue Trp-Tyr-Met cross-link is important for the catalase, but not the peroxidase activity of the enzyme.

The catalysed reaction is H2O2 + AH2 = A + 2 H2O. The enzyme catalyses 2 H2O2 = O2 + 2 H2O. Its function is as follows. Bifunctional enzyme with both catalase and broad-spectrum peroxidase activity. This is Catalase-peroxidase from Marinobacter nauticus (strain ATCC 700491 / DSM 11845 / VT8) (Marinobacter aquaeolei).